A 484-amino-acid chain; its full sequence is Dynein regulatory complex subunit 2 (484 aa).

2 coiled-coil regions span residues 92–160 (VDCK…RKTI) and 374–403 (KEQEGIEENNLEELTEELAKVMVDYTGMEN).

The protein belongs to the DRC2 family. Component of the nexin-dynein regulatory complex (N-DRC). Interacts with DRC1.

It localises to the cytoplasm. The protein localises to the cytoskeleton. Its subcellular location is the flagellum basal body. It is found in the cell projection. The protein resides in the cilium. It localises to the flagellum. The protein localises to the flagellum axoneme. In terms of biological role, component of the nexin-dynein regulatory complex (N-DRC), a key regulator of ciliary/flagellar motility which maintains the alignment and integrity of the distal axoneme and regulates microtubule sliding in motile axonemes. Plays a critical role in the assembly of N-DRC and also stabilizes the assembly of multiple inner dynein arms and radial spokes. Coassembles with DRC1 to form a central scaffold needed for assembly of the N-DRC and its attachment to the outer doublet microtubules. This Macaca fascicularis (Crab-eating macaque) protein is Dynein regulatory complex subunit 2 (CCDC65).